The primary structure comprises 434 residues: Tryptophan synthase beta chain (434 aa).

At lysine 92 the chain carries N6-(pyridoxal phosphate)lysine. Residues 411-434 form a disordered region; sequence VKGGVATSPESFDASGAKGAGSQS.

This sequence belongs to the TrpB family. In terms of assembly, tetramer of two alpha and two beta chains. Requires pyridoxal 5'-phosphate as cofactor.

The catalysed reaction is (1S,2R)-1-C-(indol-3-yl)glycerol 3-phosphate + L-serine = D-glyceraldehyde 3-phosphate + L-tryptophan + H2O. Its pathway is amino-acid biosynthesis; L-tryptophan biosynthesis; L-tryptophan from chorismate: step 5/5. In terms of biological role, the beta subunit is responsible for the synthesis of L-tryptophan from indole and L-serine. This chain is Tryptophan synthase beta chain, found in Polaromonas naphthalenivorans (strain CJ2).